Consider the following 60-residue polypeptide: Large ribosomal subunit protein bL33 (60 aa).

The protein belongs to the bacterial ribosomal protein bL33 family.

The polypeptide is Large ribosomal subunit protein bL33 (Chlorobium luteolum (strain DSM 273 / BCRC 81028 / 2530) (Pelodictyon luteolum)).